The chain runs to 512 residues: MLSLDLVFSFPAWALLLVLTLLYTLYLATTRLLLSPIRHIPGPTLAALSFWPEFYYDVVQRGQYFRQIDKMHQTYGPLVRINPFEIHIQDPSFYPVLYTGPTRRRHKWLWAARMFGNNTSAFATVRHEHHRLRRSALNPLFSKSAIQRLTPHLQHTLARLCSRLDGFAFTRQDVDLGIGLTAFAADVITEYCFGQSLELIGKDNFGKEWIDMVSAPSELGHLVKQCPWILVVCKWAPKALVRALLPGVALLFQIQERMSAQIQPLVDRAAAVDKPADPLTVFDFLLSSTLPQHEKTVDRLKGEGQTLIGAGTLTTGNALKTIIFHVLNDPDIFRKLRAEVDGALENMDILSMSDTAYLERLPYLSACIKEGLRISYGVTHRLQLIAEEPLIYSGVTIPAGTPVGMTSIFMHDNPVVFPQPREFRPERWFEADFETVQAMNRHFVPFSKGSRMCLGMNLAYAEIYLVLAVLFRRYEISLSGVTREDIEMAHDFFDPAPKEGARGLIVQLQKRG.

The helical transmembrane segment at 6–26 threads the bilayer; sequence LVFSFPAWALLLVLTLLYTLY. An N-linked (GlcNAc...) asparagine glycan is attached at Asn118. Heme is bound at residue Cys453.

The protein belongs to the cytochrome P450 family. It depends on heme as a cofactor.

The protein resides in the membrane. The protein operates within pigment biosynthesis. Functionally, N-acetyltryptophan 6-hydroxylase; part of the pathway that mediates the biosynthesis of the gray-brown conidiophore pigment. The first step of the pathway is performed by the nonribosomal peptide synthetase ivoA that catalyzes ATP-dependent unidirectional stereoinversion of L-tryptophan to D-tryptophan with complete conversion. While the stereoinversion is catalyzed by the epimerization (E) domain of ivoA, the terminal condensation (C) domain stereoselectively hydrolyzes D-tryptophanyl-S-phosphopantetheine thioester and thus represents a non-canonical C domain function. D-tryptophan is acetylated, probably by an endogenous acetyltransferase. N-acetyltryptophan is further 6-hydroxylated into N-acetyl-6-hydroxytryptophan (AHT) by the cytochrome P450 monooxygenase ivoC. N-acetyl-6-hydroxytryptophan is substrate of the N-acetyl-6-hydroxytryptophan oxidase ivoB to produce the gray-brown conidiophore pigment. In Emericella nidulans (strain FGSC A4 / ATCC 38163 / CBS 112.46 / NRRL 194 / M139) (Aspergillus nidulans), this protein is N-acetyltryptophan 6-hydroxylase ivoC.